Reading from the N-terminus, the 182-residue chain is NADH-quinone oxidoreductase subunit I (182 aa).

4Fe-4S ferredoxin-type domains follow at residues 50–82 (IILS…LQKA) and 92–121 (EFFR…MTPD). The [4Fe-4S] cluster site is built by Cys62, Cys65, Cys68, Cys72, Cys101, Cys104, Cys107, and Cys111.

The protein belongs to the complex I 23 kDa subunit family. As to quaternary structure, NDH-1 is composed of 14 different subunits. Subunits NuoA, H, J, K, L, M, N constitute the membrane sector of the complex. [4Fe-4S] cluster serves as cofactor.

It is found in the cell inner membrane. It catalyses the reaction a quinone + NADH + 5 H(+)(in) = a quinol + NAD(+) + 4 H(+)(out). Its function is as follows. NDH-1 shuttles electrons from NADH, via FMN and iron-sulfur (Fe-S) centers, to quinones in the respiratory chain. The immediate electron acceptor for the enzyme in this species is believed to be ubiquinone. Couples the redox reaction to proton translocation (for every two electrons transferred, four hydrogen ions are translocated across the cytoplasmic membrane), and thus conserves the redox energy in a proton gradient. The protein is NADH-quinone oxidoreductase subunit I of Psychrobacter arcticus (strain DSM 17307 / VKM B-2377 / 273-4).